The primary structure comprises 25 residues: Endoglucanase 1 (25 aa).

The disordered stretch occupies residues 1–25 (YDASLKPNLQIPQKNIPNNDAVNIK). Positions 10 to 25 (QIPQKNIPNNDAVNIK) are enriched in polar residues.

The enzyme catalyses Endohydrolysis of (1-&gt;4)-beta-D-glucosidic linkages in cellulose, lichenin and cereal beta-D-glucans.. Functionally, this enzyme hydrolyzes cellotetraose, cellopentaose, and cellohexaose to cellobiose and cellotriose but does not hydrolyze cellobiose or cellotriose. The chain is Endoglucanase 1 from Ruminiclostridium josui (Clostridium josui).